A 396-amino-acid chain; its full sequence is Elongation factor Tu 1 (396 aa).

The tr-type G domain occupies 10-206 (KPHCNIGTIG…AVDAYIPQPE (197 aa)). The G1 stretch occupies residues 19–26 (GHVDHGKT). Position 19 to 26 (19 to 26 (GHVDHGKT)) interacts with GTP. Thr-26 serves as a coordination point for Mg(2+). The tract at residues 60-64 (GITIS) is G2. A G3 region spans residues 81–84 (DCPG). Residues 81-85 (DCPGH) and 136-139 (NKCD) each bind GTP. Residues 136–139 (NKCD) form a G4 region. A G5 region spans residues 174-176 (SAL).

This sequence belongs to the TRAFAC class translation factor GTPase superfamily. Classic translation factor GTPase family. EF-Tu/EF-1A subfamily. In terms of assembly, monomer.

The protein localises to the cytoplasm. It carries out the reaction GTP + H2O = GDP + phosphate + H(+). Its function is as follows. GTP hydrolase that promotes the GTP-dependent binding of aminoacyl-tRNA to the A-site of ribosomes during protein biosynthesis. This chain is Elongation factor Tu 1, found in Rhodopseudomonas palustris (strain BisB5).